The sequence spans 417 residues: Histidine--tRNA ligase (417 aa).

It belongs to the class-II aminoacyl-tRNA synthetase family. In terms of assembly, homodimer.

It is found in the cytoplasm. The enzyme catalyses tRNA(His) + L-histidine + ATP = L-histidyl-tRNA(His) + AMP + diphosphate + H(+). This Caldanaerobacter subterraneus subsp. tengcongensis (strain DSM 15242 / JCM 11007 / NBRC 100824 / MB4) (Thermoanaerobacter tengcongensis) protein is Histidine--tRNA ligase.